Consider the following 685-residue polypeptide: MEINHPDQLSVEHPTPPGDSSSLNQNGPGKQDGERCSTSGQAPEQEGSLHPEKGAHDVAEELSRQLEDIISTYGSAASPRGKESTSETKEQPPNTEAPDNEDVDYEETTEEIDREPTAPEEPAAAKEPVSNKEQKLEKKILKGLGKEANLLMQNLNKLQAPEEKLDFLFKKYTELLDEHRTEQKKLKLLLKQQAQTQREKDQLQSEHNRAVLARSKLESLCRELQRHNKTLKEETLQRAREEEEKRKEITSHFQTTLTDIQTQIEQQSERNMKLCQENTELAEKLKSIIDQYELREEHLDKIFKHRELQQKLVDAKLEEAQELMQEAEERHRREKEYLLNQAAEWKLQAKVLKEQETVLQAQLTLYSGRFEEFQSTLTKSNEVFATFKQEMDKTTKKMKKLEKDTATWKARFENCNKALLDMIEEKALRAKEYECFVMKIQRLENLCRALQEERKELYKKIREAKMSEKEDQVQRTSEEEPEPSVSENEEVDAEEANSFQKAVENLATAFTILHHPEFTPDQPTERQLAVNGPQSGSDVTHQHPETARLNHPSLPADSGSPRPPVGAQAVAEGVCEATPAPTASCTPAEAELQSQGLPAENTPGPKPHKPEANTSGQAPLSPAQGSLSVVEAKYDISPSPESEGDSAVVPGCESREQPPPEVTDIPVGPSTGLPREPDACLNGVD.

The interval 1–135 (MEINHPDQLS…KEPVSNKEQK (135 aa)) is disordered. The segment covering 18–28 (GDSSSLNQNGP) has biased composition (polar residues). 2 stretches are compositionally biased toward basic and acidic residues: residues 47–67 (GSLHPEKGAHDVAEELSRQLE) and 80–90 (RGKESTSETKE). The span at 98–113 (PDNEDVDYEETTEEID) shows a compositional bias: acidic residues. Coiled coils occupy residues 138–354 (KKIL…VLKE) and 381–470 (NEVF…SEKE). Basic and acidic residues predominate over residues 465–478 (KMSEKEDQVQRTSE). 2 disordered regions span residues 465 to 497 (KMSEKEDQVQRTSEEEPEPSVSENEEVDAEEAN) and 517 to 685 (EFTP…NGVD). 3 positions are modified to phosphoserine: Ser-477, Ser-484, and Ser-486. Residues 479-495 (EEPEPSVSENEEVDAEE) show a composition bias toward acidic residues. The span at 575 to 591 (CEATPAPTASCTPAEAE) shows a compositional bias: low complexity. Residues 612 to 627 (ANTSGQAPLSPAQGSL) are compositionally biased toward polar residues.

Belongs to the taxilin family. Binds to the C-terminal coiled coil region of syntaxin family members STX1A, STX3A and STX4A. Has a preference for STX1A. As to expression, specifically expressed in skeletal muscle.

Its function is as follows. Promotes motor nerve regeneration. May be involved in intracellular vesicle traffic. This chain is Beta-taxilin (Txlnb), found in Mus musculus (Mouse).